The sequence spans 513 residues: Activin receptor type-2A (513 aa).

A signal peptide spans 1–19 (MGAAAKLAFAVFLISCSSG). Topologically, residues 20-135 (AILGRSETQE…TSNPVTPKPP (116 aa)) are extracellular. Cystine bridges form between cysteine 30–cysteine 60, cysteine 50–cysteine 78, cysteine 85–cysteine 104, cysteine 91–cysteine 103, and cysteine 105–cysteine 110. 2 N-linked (GlcNAc...) asparagine glycosylation sites follow: asparagine 43 and asparagine 66. Residues 136–161 (YYNILLYSLVPLMLIAGIVICAFWVY) traverse the membrane as a helical segment. Residues 162-513 (RHHMMAYPPV…VDFPPKESSL (352 aa)) lie on the Cytoplasmic side of the membrane. Positions 192–485 (LQLLEVKARG…GERITQMQRL (294 aa)) constitute a Protein kinase domain. ATP is bound by residues 198-206 (KARGRFGCV) and lysine 219. The Proton acceptor role is filled by aspartate 322.

It belongs to the protein kinase superfamily. TKL Ser/Thr protein kinase family. TGFB receptor subfamily. Part of a complex consisting of MAGI2/ARIP1, ACVR2A, ACVR1B and SMAD3. Interacts with MAGI2/ARIP1. Interacts with type I receptor ACVR1. Interacts with BMP7. Interacts with TSC22D1/TSC-22. Interacts with activin A/INHBA. Mg(2+) serves as cofactor. Requires Mn(2+) as cofactor.

The protein localises to the cell membrane. It carries out the reaction L-threonyl-[receptor-protein] + ATP = O-phospho-L-threonyl-[receptor-protein] + ADP + H(+). The catalysed reaction is L-seryl-[receptor-protein] + ATP = O-phospho-L-seryl-[receptor-protein] + ADP + H(+). On ligand binding, forms a receptor complex consisting of two type II and two type I transmembrane serine/threonine kinases. Type II receptors phosphorylate and activate type I receptors which autophosphorylate, then bind and activate SMAD transcriptional regulators. Receptor for activin A, activin B and inhibin A. Mediates induction of adipogenesis by GDF6. This Rattus norvegicus (Rat) protein is Activin receptor type-2A.